The chain runs to 535 residues: Unconventional prefoldin RPB5 interactor 1 (535 aa).

Position 1 is an N-acetylmethionine (M1). 4 disordered regions span residues 1–23 (MEAP…PALV), 223–330 (LLGE…VGDN), 352–383 (KNTT…QELP), and 412–431 (SRSR…AAEF). Pro residues predominate over residues 7-18 (ETPPDPSPPSAP). Composition is skewed to polar residues over residues 253 to 265 (TNVN…TDSH) and 276 to 296 (EPFS…SSSY). The span at 299 to 320 (DDDDDDDDDDDDDNIDDDDGDN) shows a compositional bias: acidic residues. Residue S372 is modified to Phosphoserine; by RPS6KB1. The residue at position 373 (T373) is a Phosphothreonine. Residues 417-427 (NSVCSDTSESS) are compositionally biased toward polar residues. Phosphoserine is present on S442.

The protein belongs to the RNA polymerase II subunit 5-mediating protein family. In terms of assembly, homodimer. Component of the PAQosome complex which is responsible for the biogenesis of several protein complexes and which consists of R2TP complex members RUVBL1, RUVBL2, RPAP3 and PIH1D1, URI complex members PFDN2, PFDN6, PDRG1, UXT and URI1 as well as ASDURF, POLR2E and DNAAF10/WDR92. Interacts with POLR2E/RPB5, RUVBL2 and RUVBL1. Interacts with PFDN2, PFDN4 and STAP1; the interactions are phosphorylation-dependent and occur in a growth-dependent manner in the mitochondrion. Interacts with UXT. Interacts with PPP1CC; the interaction is phosphorylation-dependent and occurs in a growth factor-dependent manner. Interacts (via the middle C-terminal region) with GTF2F1 and GTF2F2. Interacts with DMAP1. Interacts with TSC1 and TSC2. Interacts with PRPF8 and EFTUD2 in a ZNHIT2-dependent manner. In terms of processing, phosphorylated. Phosphorylation occurs essentially on serine residues. Phosphorylation occurs in response to androgen treatment in prostate cancer cells in a mTOR-dependent manner. Phosphorylated; hyperhosphorylated in mitochondria in a mTORC-dependent signaling pathway. Phosphorylated at Ser-372 by RPS6KB1 in a growth factor- and rapamycin-dependent manner. S6K1-mediated mitochondrial phosphorylation at Ser-372 disrupts the URI1-PPP1CC complex in the mitochondrion, relieves PPP1CC phosphatase inhibition activity and hence engages a negative feedback diminishing RPS6KB1 kinase activity, preventing sustained S6K1-dependent signaling. Ubiquitous. Expressed in ovarian cancers (at protein level). Expressed strongly in skeletal muscle. Expressed weakly in brain, heart, pancreas and in prostate epithelial cells.

The protein localises to the nucleus. Its subcellular location is the cytoplasm. It localises to the mitochondrion. It is found in the cell projection. The protein resides in the dendrite. In terms of biological role, involved in gene transcription regulation. Acts as a transcriptional repressor in concert with the corepressor UXT to regulate androgen receptor (AR) transcription. May act as a tumor suppressor to repress AR-mediated gene transcription and to inhibit anchorage-independent growth in prostate cancer cells. Required for cell survival in ovarian cancer cells. Together with UXT, associates with chromatin to the NKX3-1 promoter region. Antagonizes transcriptional modulation via hepatitis B virus X protein. Plays a central role in maintaining S6K1 signaling and BAD phosphorylation under normal growth conditions thereby protecting cells from potential deleterious effects of sustained S6K1 signaling. The URI1-PPP1CC complex acts as a central component of a negative feedback mechanism that counteracts excessive S6K1 survival signaling to BAD in response to growth factors. Mediates inhibition of PPP1CC phosphatase activity in mitochondria. Coordinates the regulation of nutrient-sensitive gene expression availability in a mTOR-dependent manner. Seems to be a scaffolding protein able to assemble a prefoldin-like complex that contains PFDs and proteins with roles in transcription and ubiquitination. This is Unconventional prefoldin RPB5 interactor 1 (URI1) from Homo sapiens (Human).